A 335-amino-acid chain; its full sequence is Methionine aminopeptidase 1D, mitochondrial (335 aa).

The N-terminal 19 residues, M1–F19, are a transit peptide targeting the mitochondrion. H161 is a substrate binding site. A divalent metal cation is bound by residues D178, D189, and H252. H259 serves as a coordination point for substrate. A divalent metal cation is bound by residues E284 and E315.

Belongs to the peptidase M24A family. Methionine aminopeptidase type 1 subfamily. It depends on Co(2+) as a cofactor. Requires Zn(2+) as cofactor. The cofactor is Mn(2+). Fe(2+) is required as a cofactor. Overexpressed in colon cancer cell lines and colon tumors as compared to normal tissues (at protein level).

It localises to the mitochondrion. The catalysed reaction is Release of N-terminal amino acids, preferentially methionine, from peptides and arylamides.. In terms of biological role, removes the N-terminal methionine from nascent proteins. The N-terminal methionine is often cleaved when the second residue in the primary sequence is small and uncharged (Met-Ala-, Cys, Gly, Pro, Ser, Thr, or Val). Requires deformylation of the N(alpha)-formylated initiator methionine before it can be hydrolyzed. May play a role in colon tumorigenesis. This is Methionine aminopeptidase 1D, mitochondrial (METAP1D) from Homo sapiens (Human).